The primary structure comprises 627 residues: Glycerophosphodiester phosphodiesterase domain-containing protein 4 (627 aa).

Residues 1–17 (MLLFLWIETSNEYFNFD) are Cytoplasmic-facing. The chain crosses the membrane as a helical span at residues 18–38 (WVIFLGTGYWFYWSIFILSLA). A topological domain (extracellular) is located at residue glycine 39. The helical transmembrane segment at 40-60 (ILTAYSSLLLLLGLLLLWEGI) threads the bilayer. Residues 61-69 (ELYLHLCHK) lie on the Cytoplasmic side of the membrane. Residues 70-90 (ILILLVILPCVILMFIICKFW) traverse the membrane as a helical segment. At 91 to 107 (KERWLVAGLSLQIFAPY) the chain is on the extracellular side. The helical transmembrane segment at 108 to 128 (VHLVSITVMVILFWPVAIYVA) threads the bilayer. Topologically, residues 129–162 (RLEREVRMRRYRMTHSEKKRLKKCNVIARLRGLQ) are cytoplasmic. Residues 163 to 183 (VAVGLPFLLIFLSLCLMPLGI) form a helical membrane-spanning segment. Residues 184–468 (YSPCIQEKEN…PHFFMTPKFY (285 aa)) lie on the Extracellular side of the membrane. A GP-PDE domain is found at 198 to 457 (PTLFGHRGAP…DNIGLLSQLN (260 aa)). Positions 230, 232, and 245 each coordinate a divalent metal cation. Residues asparagine 308 and asparagine 397 are each glycosylated (N-linked (GlcNAc...) asparagine). A helical transmembrane segment spans residues 469-489 (MFIWLLVDIISVLFIVAIFCF). Topologically, residues 490–627 (HWRRETIKEK…TMPSVEVPYP (138 aa)) are cytoplasmic.

This sequence belongs to the glycerophosphoryl diester phosphodiesterase family.

The protein localises to the membrane. This Macaca fascicularis (Crab-eating macaque) protein is Glycerophosphodiester phosphodiesterase domain-containing protein 4 (GDPD4).